Here is a 78-residue protein sequence, read N- to C-terminus: RNA-binding protein Hfq (78 aa).

The region spanning 10–70 is the Sm domain; the sequence is DLFLNSVRKQ…ISTIMPSQPV (61 aa).

The protein belongs to the Hfq family. In terms of assembly, homohexamer.

Its function is as follows. RNA chaperone that binds small regulatory RNA (sRNAs) and mRNAs to facilitate mRNA translational regulation in response to envelope stress, environmental stress and changes in metabolite concentrations. Also binds with high specificity to tRNAs. This is RNA-binding protein Hfq from Brucella abortus (strain S19).